A 212-amino-acid chain; its full sequence is Fe/S biogenesis protein NfuA (212 aa).

Residues Cys169 and Cys172 each contribute to the [4Fe-4S] cluster site.

Belongs to the NfuA family. Homodimer. Requires [4Fe-4S] cluster as cofactor.

In terms of biological role, involved in iron-sulfur cluster biogenesis. Binds a 4Fe-4S cluster, can transfer this cluster to apoproteins, and thereby intervenes in the maturation of Fe/S proteins. Could also act as a scaffold/chaperone for damaged Fe/S proteins. The polypeptide is Fe/S biogenesis protein NfuA (Acinetobacter baylyi (strain ATCC 33305 / BD413 / ADP1)).